We begin with the raw amino-acid sequence, 950 residues long: ABC transporter A family member 9 (950 aa).

A run of 6 helical transmembrane segments spans residues 31–51 (ATCLHLFSSFFFILLIFSIEE), 223–243 (IISAFYLMGPVFFLAFSMFGF), 276–296 (WLIWEGILTFVSSLFLVLFGM), 308–328 (FVLVFLLFFLFQFNMIGLAFA), 342–362 (VGFLVFLVGFITQIVTTAGFP), and 426–446 (IWLVGTFFFWFVLALYFDNII). Residues 520–765 (VQIHGLAKTY…FGTGFVATVS (246 aa)) form the ABC transporter domain. ATP is bound at residue 566-573 (GPNGAGKT).

It belongs to the ABC transporter superfamily. ABCA family. CPR flippase (TC 3.A.1.211) subfamily. Highly expressed in siliques. Detected in seedlings, rosette leaves, stems and flowers.

The protein localises to the endoplasmic reticulum membrane. Mediates the transport of acyl-CoAs and/or free fatty acids to the endoplasmic reticulum. Has no effect on the selectivity of fatty acid incorporation into triacylglycerol or further desaturation steps. In Arabidopsis thaliana (Mouse-ear cress), this protein is ABC transporter A family member 9 (ABCA9).